Consider the following 370-residue polypeptide: Aldo-keto reductase dtxS3 (370 aa).

D78 contributes to the NADP(+) binding site. The active-site Proton donor is Y83. A substrate-binding site is contributed by H174. Residues 204-205, Q230, 259-269, and 333-341 each bind NADP(+); these read SS, GPLASGRLARR, and GSVGRIEEA.

It belongs to the aldo/keto reductase family.

Its pathway is secondary metabolite biosynthesis. In terms of biological role, aldo-keto reductase; part of the gene cluster that mediates the biosynthesis of destruxins, insecticidal cyclic hexadepsipeptides which induce flaccid paralysis and visceral muscle contraction in insects through targeting the calcium channels and vacuolar-type ATPases. The aldo-keto reductase dtxS3 converts alpha-ketoisocaproic acid from deaminated leucine into alpha-hydroxyisocaproic acid (HIC), which is the first substrate for destruxin assembly by dtxS1. L-aspartate decarboxylase dtxS4 converts aspartic acid into beta-alanine, the last substrate for the destruxin assembly line performed by dtxS1. The nonribosomal peptide synthetase dtxS1 synthesizes destruxins B and B2, whereas the cytochrome P450 monooxygenase dtxS2 is required to convert destruxin B into other destruxin derivatives, including destructins C, D, A and E. Destruxin E-diol (ED) is further produced in a non-enzymatic manner from destruxin E. Destruxins play an important role in virulence and escape from insect host immune defenses. The protein is Aldo-keto reductase dtxS3 of Metarhizium robertsii (strain ARSEF 23 / ATCC MYA-3075) (Metarhizium anisopliae (strain ARSEF 23)).